The sequence spans 84 residues: Coiled-coil-helix-coiled-coil-helix domain-containing protein 7 (84 aa).

A CHCH domain is found at 12–54 (SNPCLEETDASTKCMDENQYQKDLCTSYFIKYKNCRKFWNGIM). 2 short sequence motifs (cx9C motif) span residues 15 to 25 (CLEETDASTKC) and 36 to 46 (CTSYFIKYKNC). 2 disulfides stabilise this stretch: cysteine 15–cysteine 46 and cysteine 25–cysteine 36.

This sequence belongs to the CHCHD7 family.

The protein localises to the mitochondrion intermembrane space. The chain is Coiled-coil-helix-coiled-coil-helix domain-containing protein 7 (chchd7) from Xenopus laevis (African clawed frog).